Consider the following 364-residue polypeptide: Aminomethyltransferase (364 aa).

This sequence belongs to the GcvT family. The glycine cleavage system is composed of four proteins: P, T, L and H.

It catalyses the reaction N(6)-[(R)-S(8)-aminomethyldihydrolipoyl]-L-lysyl-[protein] + (6S)-5,6,7,8-tetrahydrofolate = N(6)-[(R)-dihydrolipoyl]-L-lysyl-[protein] + (6R)-5,10-methylene-5,6,7,8-tetrahydrofolate + NH4(+). The glycine cleavage system catalyzes the degradation of glycine. The polypeptide is Aminomethyltransferase (Shewanella sediminis (strain HAW-EB3)).